The primary structure comprises 241 residues: Demethylmenaquinone methyltransferase (241 aa).

Residues Thr-60, Asp-81, and 106 to 107 contribute to the S-adenosyl-L-methionine site; that span reads DA.

Belongs to the class I-like SAM-binding methyltransferase superfamily. MenG/UbiE family.

The catalysed reaction is a 2-demethylmenaquinol + S-adenosyl-L-methionine = a menaquinol + S-adenosyl-L-homocysteine + H(+). It functions in the pathway quinol/quinone metabolism; menaquinone biosynthesis; menaquinol from 1,4-dihydroxy-2-naphthoate: step 2/2. Functionally, methyltransferase required for the conversion of demethylmenaquinol (DMKH2) to menaquinol (MKH2). The sequence is that of Demethylmenaquinone methyltransferase from Staphylococcus carnosus (strain TM300).